The following is an 895-amino-acid chain: Pentatricopeptide repeat-containing protein At1g74600, chloroplastic (895 aa).

Residues 1–71 (MNCLANESLN…CNLRTTKILQ (71 aa)) constitute a chloroplast transit peptide. PPR repeat units lie at residues 83-113 (DVFL…IPQP), 114-148 (DVVS…GFEA), 149-183 (NEIS…GYFF), 184-214 (YEVV…SLSA), 215-249 (NVYC…FQKP), 250-280 (DSYT…VIKC), 284-314 (DVFV…IPNP), 315-349 (SVVS…GVEI), 350-384 (NNCT…GFYL), 385-415 (DSSV…LDDI), 417-451 (RQNI…GLRT), 452-483 (DEFS…GLVL), 484-514 (DLTV…IPFK), 515-549 (DNAC…GTSP), 550-584 (DEST…GIDK), 585-615 (GMDL…LPEL), 616-650 (DPVS…GFTM), 651-685 (DSFA…GLCT), 686-716 (EPSV…INGP), 717-751 (DLIA…GFKP), 752-787 (DKVT…GIEP), and 788-818 (ENRH…MHIK). Positions 824–895 (WGTLLAACKI…VQKEPGWSSV (72 aa)) are type E motif; degenerate.

It belongs to the PPR family. PCMP-E subfamily.

Its subcellular location is the plastid. The protein resides in the chloroplast. This chain is Pentatricopeptide repeat-containing protein At1g74600, chloroplastic (PCMP-E69), found in Arabidopsis thaliana (Mouse-ear cress).